We begin with the raw amino-acid sequence, 266 residues long: MRLIPLAQAAQVGKWAAAHIAKRINDFKPTAERPFVLGLPTGGTPLATYKALIELYQAGEVSFEHVVTFNMDEYIGIPADHPESYRSFMYTNFFNHVNIQEANINLLNGNAEDHEAECQRYEDKIKSYGKINLFMGGVGNDGHIAFNEPASSLSSRTRIKTLTEDTRIANSRFFDGDINQVPKYALTIGVGTLLDAEEVMILVTGHNKALALEAAVEGSVNHLWTVSALQLHPKAVIVCDEPSQQELKVKTVKYFSELEAENIKGF.

The active-site Proton acceptor; for enolization step is Asp72. The active-site For ring-opening step is the Asp141. His143 functions as the Proton acceptor; for ring-opening step in the catalytic mechanism. The For ring-opening step role is filled by Glu148.

This sequence belongs to the glucosamine/galactosamine-6-phosphate isomerase family. NagB subfamily. As to quaternary structure, homohexamer.

The enzyme catalyses alpha-D-glucosamine 6-phosphate + H2O = beta-D-fructose 6-phosphate + NH4(+). It participates in amino-sugar metabolism; N-acetylneuraminate degradation; D-fructose 6-phosphate from N-acetylneuraminate: step 5/5. With respect to regulation, allosterically activated by N-acetylglucosamine 6-phosphate (GlcNAc6P). Its function is as follows. Catalyzes the reversible isomerization-deamination of glucosamine 6-phosphate (GlcN6P) to form fructose 6-phosphate (Fru6P) and ammonium ion. This is Glucosamine-6-phosphate deaminase from Vibrio campbellii (strain ATCC BAA-1116).